We begin with the raw amino-acid sequence, 363 residues long: Endopolygalacturonase A (363 aa).

The N-terminal stretch at 1 to 20 (MQLLQSSVIAATVGAALVAA) is a signal peptide. Positions 21–28 (VPVELEAR) are excised as a propeptide. Cys31 and Cys46 form a disulfide bridge. PbH1 repeat units lie at residues 158–187 (SDNL…DVGS), 188–209 (STYI…AINS), 210–230 (GSHI…SIGS), 239–260 (VEDV…RIKT), 268–290 (VSNV…IVEQ), and 302–347 (TNGI…SITG). Residue Asn162 is glycosylated (N-linked (GlcNAc...) asparagine). Asp202 (proton donor) is an active-site residue. An intrachain disulfide couples Cys204 to Cys220. His224 is a catalytic residue. Intrachain disulfides connect Cys330–Cys335 and Cys354–Cys363.

It belongs to the glycosyl hydrolase 28 family.

The protein resides in the secreted. It catalyses the reaction (1,4-alpha-D-galacturonosyl)n+m + H2O = (1,4-alpha-D-galacturonosyl)n + (1,4-alpha-D-galacturonosyl)m.. In terms of biological role, involved in maceration and soft-rotting of plant tissue. Hydrolyzes the 1,4-alpha glycosidic bonds of de-esterified pectate in the smooth region of the plant cell wall. The chain is Endopolygalacturonase A (pgaA) from Aspergillus flavus (strain ATCC MYA-384 / AF70).